Here is a 329-residue protein sequence, read N- to C-terminus: UDP-sugar transporter sqv-7 (329 aa).

Helical transmembrane passes span 15-34, 41-63, 86-108, 129-151, 155-174, 187-209, 224-246, 253-275, and 280-302; these read SAVF…KILL, SFLF…AKMF, YFFN…FTVL, SKAV…IYDL, ALGY…LGVY, YGLM…QYTG, TSSV…YSLV, SALT…GMFS, and VFQW…YTYV.

This sequence belongs to the TPT transporter family. SLC35D subfamily.

It is found in the golgi apparatus membrane. Acts as a transporter of UDP-glucuronic acid (UDP-GlcA), UDP-N-acetylgalactosamine (UDP-GalNAc) and UDP-galactose (UDP-Gal) from the cytoplasm into the Golgi lumen. Involved in the biosynthesis of glycoconjugates that play a pivotal role in development. Involved in the synthesis of chondroitin sulfate and heparan sulfate proteoglycans. Required for embryonic development. Involved in vulva epithelium invagination and embryonic development. Involved in the directed migration of hermaphrodite-specific neurons. This chain is UDP-sugar transporter sqv-7 (sqv-7), found in Caenorhabditis elegans.